A 460-amino-acid polypeptide reads, in one-letter code: Acetyl-CoA decarbonylase/synthase complex subunit beta (460 aa).

Residues cysteine 188, cysteine 191, cysteine 277, and cysteine 279 each contribute to the [Ni-Fe-S] cluster site. Positions 402–416 (EETEPEEEEVEEAYP) are enriched in acidic residues. Positions 402–422 (EETEPEEEEVEEAYPEETPIP) are disordered.

It belongs to the CdhC family. As to quaternary structure, monomer. The ACDS complex is made up of alpha, epsilon, beta, gamma and delta chains with a probable stoichiometry of (alpha(2)epsilon(2))(4)-beta(8)-(gamma(1)delta(1))(8). [Ni-Fe-S] cluster is required as a cofactor.

It catalyses the reaction Co(I)-[corrinoid Fe-S protein] + acetyl-CoA + H(+) = methyl-Co(III)-[corrinoid Fe-S protein] + CO + CoA. Functionally, part of a complex that catalyzes the reversible cleavage of acetyl-CoA, allowing autotrophic growth from CO(2). The alpha-epsilon complex generates CO from CO(2), while the beta subunit (this protein) combines the CO with CoA and a methyl group to form acetyl-CoA. The methyl group, which is incorporated into acetyl-CoA, is transferred to the beta subunit by a corrinoid iron-sulfur protein (the gamma-delta complex). In Methanothermobacter thermautotrophicus (strain ATCC 29096 / DSM 1053 / JCM 10044 / NBRC 100330 / Delta H) (Methanobacterium thermoautotrophicum), this protein is Acetyl-CoA decarbonylase/synthase complex subunit beta.